Here is a 127-residue protein sequence, read N- to C-terminus: Large ribosomal subunit protein bL12 (127 aa).

Residues 101–127 (VKTGVSKEEAEDAKKQLVESGAEVEIK) form a disordered region. Basic and acidic residues predominate over residues 105–117 (VSKEEAEDAKKQL).

It belongs to the bacterial ribosomal protein bL12 family. As to quaternary structure, homodimer. Part of the ribosomal stalk of the 50S ribosomal subunit. Forms a multimeric L10(L12)X complex, where L10 forms an elongated spine to which 2 to 4 L12 dimers bind in a sequential fashion. Binds GTP-bound translation factors.

Functionally, forms part of the ribosomal stalk which helps the ribosome interact with GTP-bound translation factors. Is thus essential for accurate translation. This Geobacter metallireducens (strain ATCC 53774 / DSM 7210 / GS-15) protein is Large ribosomal subunit protein bL12.